Reading from the N-terminus, the 90-residue chain is uncharacterized protein (90 aa).

Residues 1–18 (MSRALFAVVLAFPLIALA) form the signal peptide.

This is an uncharacterized protein from Escherichia coli (strain K12).